The following is a 245-amino-acid chain: DNA polymerase zeta processivity subunit (245 aa).

One can recognise an HORMA domain in the interval 3–203 (RWVEKWLRVY…PPKIKLTSLV (201 aa)).

It belongs to the MAD2 family. Forms DNA polymerase zeta with REV3. Interacts with REV1.

It is found in the mitochondrion. Its function is as follows. Required for DNA damage induced mutagenesis. Involved in DNA repair, mitochondrial DNA repair and translesion synthesis. Has a role in the bypass of abasic (AP) sites. This is DNA polymerase zeta processivity subunit (REV7) from Saccharomyces cerevisiae (strain ATCC 204508 / S288c) (Baker's yeast).